Reading from the N-terminus, the 7785-residue chain is Probable non-canonical nonribosomal peptide synthetase (NRPS) CymA (7785 aa).

Carrier domains follow at residues 487-562, 1908-1983, and 2958-3033; these read TARS…QRQE, HART…SEQQ, and SPGM…LEGG. O-(pantetheine 4'-phosphoryl)serine is present on residues Ser-522, Ser-1943, and Ser-2993. Residues 3088–3111 form an LRR 1 repeat; sequence RLALADVVVRHEALRTVFAERAGN. Carrier domains follow at residues 3978–4053, 5002–5077, and 6389–6464; these read APRT…SEQQ, EPRT…LEAN, and GPRD…AQGS. O-(pantetheine 4'-phosphoryl)serine is present on residues Ser-4013, Ser-5037, and Ser-6424. The LRR 2 repeat unit spans residues 6853 to 6875; that stretch reads TGVSRVDLSVNAIETFDDHGLPA. The Carrier 7 domain occupies 7432-7507; it reads GPRTPQEEIL…QLAEQLGSDG (76 aa). The residue at position 7467 (Ser-7467) is an O-(pantetheine 4'-phosphoryl)serine.

Pantetheine 4'-phosphate is required as a cofactor.

In terms of biological role, probable non-canonical nonribosomal peptide synthetase (NRPS); part of the gene cluster that mediates the biosynthesis of cyclic heptapeptides, known as cyclomarins and also of cyclic dipeptides, called cyclomarazines, which have both antimicrobial and cytotoxic effects. First, CymD catalyzes the reverse N-prenylation of monomeric L-tryptophan with dimethylallyl diphosphate (DMAPP) to form N-(1,1-dimethylallyl)-tryptophan (r-N-DMAT). The N-(1,1-dimethylallyl)-tryptophan produced by CymD is then combined with a range of standard and nonproteinogenic amino acid substrates to synthesize the peptides, a process that is probably catalyzed by the non-canonical nonribosomal peptide synthetase (NRPS), CymA. Other proteins in the cluster catalyze further modifications of the peptides including CymV which catalyzes the oxidation of olefinic cyclomarins and cyclomarazines to their respective epoxide derivatives. The chain is Probable non-canonical nonribosomal peptide synthetase (NRPS) CymA from Salinispora arenicola (strain CNS-205).